Here is a 793-residue protein sequence, read N- to C-terminus: Outer membrane protein assembly factor BamA (793 aa).

The signal sequence occupies residues methionine 1–alanine 19. POTRA domains are found at residues phenylalanine 22–lysine 89, serine 90–aspartate 170, alanine 173–glycine 259, tyrosine 262–glycine 341, and leucine 344–arginine 418.

This sequence belongs to the BamA family. In terms of assembly, part of the Bam complex.

The protein localises to the cell outer membrane. Its function is as follows. Part of the outer membrane protein assembly complex, which is involved in assembly and insertion of beta-barrel proteins into the outer membrane. This Haemophilus influenzae protein is Outer membrane protein assembly factor BamA.